A 297-amino-acid polypeptide reads, in one-letter code: Mitochondrial thiamine pyrophosphate carrier 1 (297 aa).

Solcar repeat units follow at residues 13 to 94 (SHVF…TNAA), 102 to 195 (PPTI…IRAR), and 196 to 295 (WPET…LMRV). 6 consecutive transmembrane segments (helical) span residues 19–36 (LVSGAIAGLAARSAIAPL), 75–91 (IMYIIYGSVQFGTYSYT), 109–128 (LAGAITGMASSLCSYPFDVL), 163–187 (GLGGFFHGVATSMANVTVSTAAMFG), 203–219 (TAGAISGVISRTITFPL), and 270–287 (GIGLGLLKSVPNTAINLW).

The protein belongs to the mitochondrial carrier (TC 2.A.29) family.

The protein localises to the mitochondrion inner membrane. Its function is as follows. Mitochondrial transporter that mediates uptake of thiamine pyrophosphate (ThPP) into mitochondria. The chain is Mitochondrial thiamine pyrophosphate carrier 1 (TPC1) from Vanderwaltozyma polyspora (strain ATCC 22028 / DSM 70294 / BCRC 21397 / CBS 2163 / NBRC 10782 / NRRL Y-8283 / UCD 57-17) (Kluyveromyces polysporus).